The sequence spans 83 residues: Small ribosomal subunit protein bS16 (83 aa).

Belongs to the bacterial ribosomal protein bS16 family.

In Pseudomonas fluorescens (strain SBW25), this protein is Small ribosomal subunit protein bS16.